A 141-amino-acid polypeptide reads, in one-letter code: Small ribosomal subunit protein eS12 (141 aa).

This sequence belongs to the eukaryotic ribosomal protein eS12 family. As to quaternary structure, component of the small ribosomal subunit. Mature ribosomes consist of a small (40S) and a large (60S) subunit. The 40S subunit contains about 32 different proteins and 1 molecule of RNA (18S). The 60S subunit contains about 42 different proteins and 3 molecules of RNA (28S, 5.8S and 5S).

It is found in the cytoplasm. Component of the ribosome, a large ribonucleoprotein complex responsible for the synthesis of proteins in the cell. The small ribosomal subunit (SSU) binds messenger RNAs (mRNAs) and translates the encoded message by selecting cognate aminoacyl-transfer RNA (tRNA) molecules. The large subunit (LSU) contains the ribosomal catalytic site termed the peptidyl transferase center (PTC), which catalyzes the formation of peptide bonds, thereby polymerizing the amino acids delivered by tRNAs into a polypeptide chain. The nascent polypeptides leave the ribosome through a tunnel in the LSU and interact with protein factors that function in enzymatic processing, targeting, and the membrane insertion of nascent chains at the exit of the ribosomal tunnel. The protein is Small ribosomal subunit protein eS12 of Plasmodium falciparum (isolate 3D7).